Here is a 325-residue protein sequence, read N- to C-terminus: Beta-ketoacyl-[acyl-carrier-protein] synthase III (325 aa).

Active-site residues include Cys119 and His252. The tract at residues 253–257 (QANIR) is ACP-binding. Asn282 is a catalytic residue.

The protein belongs to the thiolase-like superfamily. FabH family. In terms of assembly, homodimer.

The protein resides in the cytoplasm. It carries out the reaction malonyl-[ACP] + acetyl-CoA + H(+) = 3-oxobutanoyl-[ACP] + CO2 + CoA. Its pathway is lipid metabolism; fatty acid biosynthesis. Functionally, catalyzes the condensation reaction of fatty acid synthesis by the addition to an acyl acceptor of two carbons from malonyl-ACP. Catalyzes the first condensation reaction which initiates fatty acid synthesis and may therefore play a role in governing the total rate of fatty acid production. Possesses both acetoacetyl-ACP synthase and acetyl transacylase activities. Its substrate specificity determines the biosynthesis of branched-chain and/or straight-chain of fatty acids. The chain is Beta-ketoacyl-[acyl-carrier-protein] synthase III from Verminephrobacter eiseniae (strain EF01-2).